A 362-amino-acid chain; its full sequence is D-alanine--D-alanine ligase (362 aa).

Positions 141–346 (KNIFAEAGLN…YPELIEELIR (206 aa)) constitute an ATP-grasp domain. 174-229 (EEALGYPCFVKPANLGSSVGINKCKDREELEKAFEEAFQFDRKIIVEENIIGREVE) lines the ATP pocket. The Mg(2+) site is built by Asp-300, Glu-313, and Asn-315.

It belongs to the D-alanine--D-alanine ligase family. Mg(2+) serves as cofactor. Requires Mn(2+) as cofactor.

It localises to the cytoplasm. The catalysed reaction is 2 D-alanine + ATP = D-alanyl-D-alanine + ADP + phosphate + H(+). It participates in cell wall biogenesis; peptidoglycan biosynthesis. Cell wall formation. The chain is D-alanine--D-alanine ligase from Bacillus cytotoxicus (strain DSM 22905 / CIP 110041 / 391-98 / NVH 391-98).